The sequence spans 771 residues: MTTNLYAIAGPSKPTTPTSTPSPRSEPPSPLKSLTSLPTNPLNPQGTSTSNALTNQSSSTGIGISKPGLSVDENGEVMKVPAFLNKLYTMVSDPEVDDLIYWGENGDSFFVPNAELFGRELLPRWFKHSNFSSFVRQLNMYGFHKVPHLQSGALKNETPIELWEFANPYFKRGQPQLLTKVTRKNNRLSNSGVGSSSSLGGSGAGGGMNTRSASAAAASGSGSGQIQQAISQGHEAGNHSTSGKYLITDGTTPGSAPPSHTSAGPLIAPQTLDLSAINSGIAAIRQTQASIATDLRKLQASNEALWRQAYETQEKQRKHEETIDLIVSFLERLFGTEGEGLKGLKEAMRRGVGVRRDRDGREGRDSRDARFADDDDGGQKKRRRVGLDRMIEGGSGDGTGEHGEIESPSSDDRLVEIGSNSEYSIPSVKRTSSSSHPLSLGQLGSSRFTALPSEDPSPSGSGLGSTPYEGLRTTQASAHGAGADVNVTDPTLGMNHLSPLSDTDPLLPSSSNALAPYTSHPSFPSSNPNPSSAWAFNPSQPLLSPTSAVAAAHAYNLDPSLLQTTIGSLLQSPAVAQMFLKSLSASAQGQALTSHSHPHNPSLLNPNPNGNASTSASASAHDMNTEGLGTGSGTKDLDPTLALFSPLPSHSSLASQSNDLLKSYNDALTVGEGVDNLQESIDSLVRSMGLDLPNGGSSSVGVDVGDGSGVGTGTGEGDGEFNVDEFLQGLAKEGEGEEGEREVGGDGDASSSGAGAENGRKEDVIAQSGLK.

A disordered region spans residues 1-70; it reads MTTNLYAIAG…GIGISKPGLS (70 aa). 2 stretches are compositionally biased toward low complexity: residues 11 to 23 and 31 to 42; these read PSKP…TPSP and LKSLTSLPTNPL. Residues 43–62 show a composition bias toward polar residues; sequence NPQGTSTSNALTNQSSSTGI. Residues 78–168 mediate DNA binding; that stretch reads MKVPAFLNKL…PIELWEFANP (91 aa). A disordered region spans residues 183–266; sequence RKNNRLSNSG…PPSHTSAGPL (84 aa). 2 stretches are compositionally biased toward low complexity: residues 189–199 and 212–233; these read SNSGVGSSSSL and SASA…ISQG. The segment covering 238 to 262 has biased composition (polar residues); it reads NHSTSGKYLITDGTTPGSAPPSHTS. The interval 280-333 is involved in trimerization; the sequence is GIAAIRQTQASIATDLRKLQASNEALWRQAYETQEKQRKHEETIDLIVSFLERL. Composition is skewed to basic and acidic residues over residues 350–372 and 399–415; these read RGVG…ARFA and TGEH…DRLV. Disordered stretches follow at residues 350–513, 590–634, and 708–771; these read RGVG…SSNA, QALT…GSGT, and SGVG…SGLK. The span at 418-448 shows a compositional bias: polar residues; the sequence is GSNSEYSIPSVKRTSSSSHPLSLGQLGSSRF. Composition is skewed to low complexity over residues 497-511 and 599-620; these read LSPL…PSSS and HNPS…SASA.

This sequence belongs to the HSF family. Homotrimer. Homotrimerization increases the affinity of HSF1 to DNA. Interacts with transcriptional coregulator SSA1 on chromatin. Phosphorylated at high temperature.

Its subcellular location is the nucleus. In terms of biological role, DNA-binding transcription factor that specifically binds heat shock promoter elements (HSE) and activates transcription. Promotes thermotolerance by transiently regulating a subset of genes. Induces expression of STI, SSA1, SSA2, HSP78 and KAR2 during the heat response. This chain is Heat shock transcription factor, found in Cryptococcus neoformans var. grubii serotype A (strain H99 / ATCC 208821 / CBS 10515 / FGSC 9487) (Filobasidiella neoformans var. grubii).